The primary structure comprises 163 residues: Nucleotide-binding protein ECA1137 (163 aa).

This sequence belongs to the YajQ family.

In terms of biological role, nucleotide-binding protein. This chain is Nucleotide-binding protein ECA1137, found in Pectobacterium atrosepticum (strain SCRI 1043 / ATCC BAA-672) (Erwinia carotovora subsp. atroseptica).